The sequence spans 726 residues: Methionine--tRNA ligase (726 aa).

The 'HIGH' region motif lies at 12-22 (PYVNNIPHLGN). Zn(2+) contacts are provided by Cys143, Cys146, Cys155, and Cys158. The 'KMSKS' region motif lies at 330 to 334 (KFSKS). Position 333 (Lys333) interacts with ATP. The tRNA-binding domain occupies 562 to 667 (FSEQICLKTV…DNPIPGERVI (106 aa)).

Belongs to the class-I aminoacyl-tRNA synthetase family. MetG type 1 subfamily. Homodimer. Zn(2+) is required as a cofactor.

The protein localises to the cytoplasm. The enzyme catalyses tRNA(Met) + L-methionine + ATP = L-methionyl-tRNA(Met) + AMP + diphosphate. Functionally, is required not only for elongation of protein synthesis but also for the initiation of all mRNA translation through initiator tRNA(fMet) aminoacylation. The sequence is that of Methionine--tRNA ligase from Borrelia duttonii (strain Ly).